The sequence spans 333 residues: Na(+)-translocating ferredoxin:NAD(+) oxidoreductase complex subunit B (333 aa).

The segment at 1–27 (MLNAILVPVGILGVFGLIFGIGLAIAA) is hydrophobic. One can recognise a 4Fe-4S domain in the interval 33–92 (YEDPRVPLVRAALPGANCGGCGLPGCDALAANIVGGSAAIDACPVGGASCAAAVAEIMGM). C50, C53, C58, C75, C138, C142, C148, C152, C172, C175, C178, C182, C217, C220, C223, C227, C246, C249, C252, C256, C279, C282, C285, C289, C310, C313, C316, and C320 together coordinate [4Fe-4S] cluster. 4Fe-4S ferredoxin-type domains are found at residues 126-162 (REAMIASGGSKGCRYGCLGYGTCKAVCPFDAIVIGED), 163-192 (GLPKVDPEKCTSCGKCVEACPKSIMTLVPE), 207-237 (KIARLSCTTACIACGACVKACRFDAITVENN), 239-266 (AKIDYDKCRQCYECVDKCPMNCISGDVE), 270-299 (STAYIIEENCIACGLCAKNCPVNAITGEIK), and 301-330 (PPYVIDHDMCIGCGICFDKCRKSAIEMRPN).

It belongs to the 4Fe4S bacterial-type ferredoxin family. RnfB subfamily. The complex is composed of six subunits: RnfA, RnfB, RnfC, RnfD, RnfE and RnfG. It depends on [4Fe-4S] cluster as a cofactor.

The protein localises to the cell membrane. The catalysed reaction is 2 reduced [2Fe-2S]-[ferredoxin] + Na(+)(in) + NAD(+) + H(+) = 2 oxidized [2Fe-2S]-[ferredoxin] + Na(+)(out) + NADH. Its function is as follows. Part of a membrane-bound complex that couples electron transfer with translocation of ions across the membrane. Couples electron transfer from reduced ferredoxin to NAD(+) with electrogenic movement of Na(+) out of the cell. Involved in caffeate respiration. This chain is Na(+)-translocating ferredoxin:NAD(+) oxidoreductase complex subunit B, found in Acetobacterium woodii (strain ATCC 29683 / DSM 1030 / JCM 2381 / KCTC 1655 / WB1).